The sequence spans 140 residues: Beta/delta-urticatoxin-De2a (140 aa).

The first 18 residues, 1 to 18, serve as a signal peptide directing secretion; sequence MKTSTALVLLLALTATSA. Positions 19–78 are excised as a propeptide; sequence SSGDHQFIDEQNIMNVAEGKNVISSLSSSGGGDDAAAIMESVLVNGGNRKMVFMMVSGSQ. Intrachain disulfides connect C81–C95, C88–C100, C94–C108, C113–C127, C120–C131, and C126–C139.

Belongs to the urticatoxin-2 family. Expressed in trichomes, that are stiff epidermal hairs located on the surface of petioles and leaves.

The protein localises to the secreted. In terms of biological role, plant defense neurotoxin that causes pain and systemic symptoms in mammals via modulation of voltage-gated sodium channels (Nav). Potent modulator of human Nav1.5/SCN5A (EC(50)=55 nM), Nav1.6/SCN8A (EC(50)=0.86 nM), and Nav1.7/SCN9A (EC(50)=208 nM), where it shifts the activation threshold to more negative potentials and delays fast inactivation. Also shifts the voltage-dependence of steady-state fast inactivation of Nav1.6/SCN8A, but not that of Nav1.5/SCN5A or Nav1.7/SCN9A. On Nav1.7/SCN9A, principally acts by binding to extracellular loops of domain IV (Nav site 3). In vivo, intraplantar injection into mice causes numerous dose-dependent, immediate, and long-lasting spontaneous pain behaviors, while no swelling is observed in the injected paw. At the highest doses tested, systemic symptoms including hypokinesia and hypersalivation are observed. In Dendrocnide excelsa (Giant stinging tree), this protein is Beta/delta-urticatoxin-De2a.